The primary structure comprises 330 residues: Ferredoxin--NADP reductase (330 aa).

The FAD site is built by glutamate 35, glutamine 43, tyrosine 48, valine 90, phenylalanine 123, aspartate 285, and threonine 326.

Belongs to the ferredoxin--NADP reductase type 2 family. In terms of assembly, homodimer. It depends on FAD as a cofactor.

The catalysed reaction is 2 reduced [2Fe-2S]-[ferredoxin] + NADP(+) + H(+) = 2 oxidized [2Fe-2S]-[ferredoxin] + NADPH. In Streptococcus pyogenes serotype M6 (strain ATCC BAA-946 / MGAS10394), this protein is Ferredoxin--NADP reductase.